A 90-amino-acid polypeptide reads, in one-letter code: Small ribosomal subunit protein uS15c (90 aa).

The protein belongs to the universal ribosomal protein uS15 family. Part of the 30S ribosomal subunit.

It is found in the plastid. Its subcellular location is the chloroplast. This Morus indica (Mulberry) protein is Small ribosomal subunit protein uS15c (rps15).